The primary structure comprises 31 residues: Cytochrome b6-f complex subunit 6 (31 aa).

A helical transmembrane segment spans residues 3-23 (IITSYFGFLLTALTIASALFI).

The protein belongs to the PetL family. In terms of assembly, the 4 large subunits of the cytochrome b6-f complex are cytochrome b6, subunit IV (17 kDa polypeptide, PetD), cytochrome f and the Rieske protein, while the 4 small subunits are PetG, PetL, PetM and PetN. The complex functions as a dimer.

The protein localises to the plastid. Its subcellular location is the chloroplast thylakoid membrane. In terms of biological role, component of the cytochrome b6-f complex, which mediates electron transfer between photosystem II (PSII) and photosystem I (PSI), cyclic electron flow around PSI, and state transitions. PetL is important for photoautotrophic growth as well as for electron transfer efficiency and stability of the cytochrome b6-f complex. This is Cytochrome b6-f complex subunit 6 from Helianthus annuus (Common sunflower).